We begin with the raw amino-acid sequence, 245 residues long: Ubiquinone biosynthesis O-methyltransferase (245 aa).

Residues Arg49, Gly69, Asp90, and Met134 each coordinate S-adenosyl-L-methionine.

It belongs to the methyltransferase superfamily. UbiG/COQ3 family.

The catalysed reaction is a 3-demethylubiquinol + S-adenosyl-L-methionine = a ubiquinol + S-adenosyl-L-homocysteine + H(+). The enzyme catalyses a 3-(all-trans-polyprenyl)benzene-1,2-diol + S-adenosyl-L-methionine = a 2-methoxy-6-(all-trans-polyprenyl)phenol + S-adenosyl-L-homocysteine + H(+). It functions in the pathway cofactor biosynthesis; ubiquinone biosynthesis. In terms of biological role, O-methyltransferase that catalyzes the 2 O-methylation steps in the ubiquinone biosynthetic pathway. This is Ubiquinone biosynthesis O-methyltransferase from Vibrio cholerae serotype O1 (strain ATCC 39541 / Classical Ogawa 395 / O395).